The following is a 119-amino-acid chain: Large ribosomal subunit protein uL18 (119 aa).

The interval 1-22 (MGHVEKVARRHKIKTRSKARGQ) is disordered. Residues 8-19 (ARRHKIKTRSKA) are compositionally biased toward basic residues.

It belongs to the universal ribosomal protein uL18 family. As to quaternary structure, part of the 50S ribosomal subunit; part of the 5S rRNA/L5/L18/L25 subcomplex. Contacts the 5S and 23S rRNAs.

In terms of biological role, this is one of the proteins that bind and probably mediate the attachment of the 5S RNA into the large ribosomal subunit, where it forms part of the central protuberance. In Chlorobium phaeobacteroides (strain BS1), this protein is Large ribosomal subunit protein uL18.